The sequence spans 418 residues: Histidine--tRNA ligase (418 aa).

It belongs to the class-II aminoacyl-tRNA synthetase family. Homodimer.

The protein localises to the cytoplasm. The catalysed reaction is tRNA(His) + L-histidine + ATP = L-histidyl-tRNA(His) + AMP + diphosphate + H(+). The polypeptide is Histidine--tRNA ligase (Dehalococcoides mccartyi (strain ATCC BAA-2100 / JCM 16839 / KCTC 5957 / BAV1)).